Reading from the N-terminus, the 311-residue chain is Ribonuclease 3 (311 aa).

Positions 20 to 145 constitute an RNase III domain; it reads YLCFYRILGF…FIGAIYLDQG (126 aa). Residue glutamate 62 participates in Mg(2+) binding. The active site involves aspartate 66. Residues asparagine 131 and glutamate 134 each contribute to the Mg(2+) site. Glutamate 134 is an active-site residue. In terms of domain architecture, DRBM spans 173–242; it reads NFKSKLIEWS…AQMAIKKVKD (70 aa). Residues 250 to 311 are disordered; that stretch reads NEAKSQHSKP…EVEATETEKE (62 aa). Positions 262 to 288 are enriched in acidic residues; sequence VETESVEPELTESETMEPDTLETEAPE.

Belongs to the ribonuclease III family. As to quaternary structure, homodimer. Mg(2+) is required as a cofactor.

Its subcellular location is the cytoplasm. It carries out the reaction Endonucleolytic cleavage to 5'-phosphomonoester.. In terms of biological role, digests double-stranded RNA. Involved in the processing of primary rRNA transcript to yield the immediate precursors to the large and small rRNAs (23S and 16S). Processes some mRNAs, and tRNAs when they are encoded in the rRNA operon. Processes pre-crRNA and tracrRNA of type II CRISPR loci if present in the organism. This is Ribonuclease 3 from Bacteroides thetaiotaomicron (strain ATCC 29148 / DSM 2079 / JCM 5827 / CCUG 10774 / NCTC 10582 / VPI-5482 / E50).